A 169-amino-acid polypeptide reads, in one-letter code: Der GTPase-activating protein YihI (169 aa).

Disordered stretches follow at residues 1–83 (MNPL…PTKP) and 150–169 (DEEE…LKGN). Over residues 21–30 (NREELNAEGR) the composition is skewed to basic and acidic residues. Positions 31 to 40 (ARKREKKHRG) are enriched in basic residues. Basic and acidic residues-rich tracts occupy residues 51–66 (SGDK…DPRL) and 150–161 (DEEEREEEKQDD).

Belongs to the YihI family. As to quaternary structure, interacts with Der.

A GTPase-activating protein (GAP) that modifies Der/EngA GTPase function. May play a role in ribosome biogenesis. This chain is Der GTPase-activating protein YihI, found in Photorhabdus laumondii subsp. laumondii (strain DSM 15139 / CIP 105565 / TT01) (Photorhabdus luminescens subsp. laumondii).